Reading from the N-terminus, the 406-residue chain is COP9 signalosome complex subunit 4 (406 aa).

Residues 197–366 (YRRKFIEAAQ…GIVHFETREP (170 aa)) form the PCI domain.

It belongs to the CSN4 family. In terms of assembly, component of the CSN complex, probably composed of cops1, cops2, cops3, cops4, cops5, cops6, cops7, cops8 and cops9.

The protein localises to the cytoplasm. The protein resides in the nucleus. It localises to the cytoplasmic vesicle. It is found in the secretory vesicle. Its subcellular location is the synaptic vesicle. Functionally, component of the COP9 signalosome complex (CSN), a complex involved in various cellular and developmental processes. The CSN complex is an essential regulator of the ubiquitin (Ubl) conjugation pathway by mediating the deneddylation of the cullin subunits of E3 ligase complexes, leading to modify the Ubl ligase activity. In Danio rerio (Zebrafish), this protein is COP9 signalosome complex subunit 4 (cops4).